Reading from the N-terminus, the 911-residue chain is MPKAGGSEWATLWIIDALENNKFPYFSWFDRNNLLFAAPAPLPAGSDIPPGWYSVYHAFDEECDRVYGPSPVVGQTVYGRFGRLLRGTRRAVVRNDLRYSDTFGGSYVVWQLVRTPFKNCTYCYGAAYGPEKLQRFIQCLLSPPMQTTATRRSDTREQSYEEAGAAAPAPPKAPSGLRGRPRKSNRYYNVGDITTEQKAACSVWIPVNEGASTSGMGSSGTRQVTQASSFTWRVPGDPPAPSTLTGPSDPHSSGAGLPGTAPPKPQHETRLAGTVSGVSGVAQTPGDTGQLAPPMRDGSRLPSTSPWIPACFPWGDLPVTGWWPQGASGLPEKVHPPTTGQFDPLSPRWTYTGIPSSQLNPAAPSWIPPHAQAGTFVGEFSQGAPLAPQGLLPQSGQCASAWLPRRETGAEGACGASTEGRAPQGAASERVYPFEPQPPSAPAPGYAKPSCYNWSPLAEPPATRPIRAPVWHPPVGHAVVPEVRTPLWIPWSSGGAPNQGLSHTQGGASATPSAGAPPTPEVAERQEPSSSGIPYVCQGDNMATGYRRVTTSSGALEVEIIDLTGDSDTPSTTVASTPLPVSGPRVFQPTVLYSAPEPAVNPEVSHLPTELERRECVCPGSGERPRVPLVSTYAGDRYAVGGYGPEQSLVPPPLGLPLTLSNLQGEDICTWEEGLGNILSELQEEPSSSTRQATDRRRPRSRSPHGRRTPVSHSGPEKPPSKMFFDPPDSQRVSFVVEIFVYGNLRGTLRREGDAGEAMLCSWPVGDTLGHLCQSFVPELLRIPRLTVPSPEQMEILNRVFEGLGHGFPIFCSMSGIYSRNATQVEGWWFGNPNSRYERILRSFSPRVPQQLFNTARYLATTAAIPQTPLSVNPVTCGTVFFGASPASTENFQNVPLTVKIFIGSIWDSLH.

A DNA-binding region (IRF tryptophan pentad repeat) is located at residues 7 to 114 (SEWATLWIID…GSYVVWQLVR (108 aa)). Disordered stretches follow at residues 147-184 (TTATRRSDTREQSYEEAGAAAPAPPKAPSGLRGRPRKS), 211-302 (ASTS…SRLP), 494-537 (GGAP…PYVC), and 681-727 (ELQE…FFDP). Over residues 211 to 221 (ASTSGMGSSGT) the composition is skewed to low complexity. Polar residues-rich tracts occupy residues 222–231 (RQVTQASSFT) and 495–505 (GAPNQGLSHTQ). Basic residues predominate over residues 697–710 (RRPRSRSPHGRRTP).

Belongs to the IRF family. In terms of assembly, interacts with host MDM2; this interaction facilitates the proteasomal degradation of TP53/p53. Interacts with host IRF7; this interaction prevents IRF7 dimerization and subsequent activation.

It localises to the host nucleus. In terms of biological role, plays a role in host cell apoptosis modulation by promoting TP53/p53 ubiquitination and subsequent degradation and thus down-regulating TP53/p53-mediated apoptosis. Works as a potential viral transcription factor to modulate host gene expression to build favorable environments for the viral lytic life cycle and greatly accelerates the induction of an immediate early gene RTA, early genes ORF36 and ORF57, late genes ORF25 and ORF64, and latent genes LANA1 and v-IRF3. Inhibits host interferon-alpha production by interacting with host IRF7 and preventing IRF7 dimerization. The protein is Viral IRF4-like protein (vIRF-4) of Homo sapiens (Human).